The following is a 195-amino-acid chain: Myelin-associated neurite-outgrowth inhibitor (195 aa).

Over 1–18 (MNPVYSPASSGVPYANPK) the chain is Cytoplasmic. A helical transmembrane segment spans residues 19 to 43 (GIGYPAGFPVGYAAAAPAYSPSMYP). At 44-143 (GANPAFPSGY…APPIPPPRPN (100 aa)) the chain is on the extracellular side. A helical membrane pass occupies residues 144–163 (GVTMGMVGGTTMAMSAGTLL). The Cytoplasmic segment spans residues 164 to 195 (TTHSPTPVAPHPSMPTYRQPATPTYSYVPPQW).

This sequence belongs to the FAM168 family.

It is found in the cytoplasm. The protein resides in the perinuclear region. It localises to the cell membrane. Its subcellular location is the cell projection. The protein localises to the axon. Functionally, inhibitor of neuronal axonal outgrowth. In Danio rerio (Zebrafish), this protein is Myelin-associated neurite-outgrowth inhibitor (fam168b).